The chain runs to 644 residues: Sodium/hydrogen exchanger 9 (644 aa).

The Lumenal segment spans residues 1–20 (MAGQLRLTSGKDEDHFQHQG). The helical transmembrane segment at 21-41 (AVELLAFNFLLILTILTIWLF) threads the bilayer. Residues 42–45 (KNHR) are Cytoplasmic-facing. A helical transmembrane segment spans residues 46 to 66 (FRFLHETGGAMVYGLIMGLIL). At 67-126 (RYATAPTDIDSGTVYNCGKLLFSPSTLLVNITDQVYEYKYQREINQHNISPHQGNAILEK) the chain is on the lumenal side. The helical transmembrane segment at 127–147 (MTFDPEIFFNVLLPPIIFHAG) threads the bilayer. Residues 148 to 164 (YSLKKRHFFQNLGSILT) are Cytoplasmic-facing. A helical transmembrane segment spans residues 165–185 (YAFLGTAISCVVIGLIMYGFV). At 186–203 (KAMVHAGQLKSGDFHFTD) the chain is on the lumenal side. Residues 204–224 (CLFFGSLMSATDPVTVLAIFH) traverse the membrane as a helical segment. The Cytoplasmic portion of the chain corresponds to 225–235 (ELHVDPDLYTL). Residues 236-256 (LFGESVLNDAVAIVLTYSISI) form a helical membrane-spanning segment. The Lumenal segment spans residues 257–277 (YSPKENPNAFDTAAFFQSVGN). The helical transmembrane segment at 278–298 (FLGIFAGSFAMGSAYAVVTAL) threads the bilayer. Over 299 to 309 (LTKFTKLREFP) the chain is Cytoplasmic. A helical membrane pass occupies residues 310-327 (MLETGLFFLLSWSAFLSA). The Lumenal segment spans residues 328–333 (EAAGLT). A helical transmembrane segment spans residues 334–350 (GIVAVLFCGVTQAHYTY). Residues 351–364 (NNLSSDSKLRTKQL) are Cytoplasmic-facing. A helical membrane pass occupies residues 365–385 (FEFMNFLAENVIFCYMGLALF). Threonine 386 is a topological domain (lumenal). Residues 387–407 (FQNHIFNALFILGAFLAIFVA) form a helical membrane-spanning segment. The Cytoplasmic portion of the chain corresponds to 408 to 429 (RACNIYPLSFLLNLGRKQKIPW). Residues 430-450 (NFQHMMMFSGLRGAIAFALAI) traverse the membrane as a helical segment. Residues 451 to 465 (RNTESQPKQMMFTTT) are Lumenal-facing. A helical membrane pass occupies residues 466-486 (LLLVFFTVWVFGGGTTPMLTW). The Cytoplasmic segment spans residues 487 to 644 (LQIRVGVDLD…EQTRGQPQMD (158 aa)).

This sequence belongs to the monovalent cation:proton antiporter 1 (CPA1) transporter (TC 2.A.36) family. In terms of assembly, homodimer; phosphatidylinositol-4,5-bisphosphate (PIP2) and phosphatidylinositol 3,4,5-trisphosphate (PIP3) could be involved in the dimer stabilization. Interacts (via the C-terminus) with RACK1. Interacts with CHP1. Expressed in hair bundles and in vestibular hair bundles. Expressed in brain.

It is found in the late endosome membrane. Its subcellular location is the early endosome membrane. The protein localises to the recycling endosome membrane. The protein resides in the cell membrane. It localises to the cytoplasmic vesicle. It is found in the phagosome membrane. It catalyses the reaction Na(+)(in) + H(+)(out) = Na(+)(out) + H(+)(in). The catalysed reaction is K(+)(in) + H(+)(out) = K(+)(out) + H(+)(in). Its function is as follows. Endosomal Na(+), K(+)/H(+) antiporter. Mediates the electroneutral exchange of endosomal luminal H(+) for a cytosolic Na(+) or K(+). By facilitating proton efflux, SLC9A9 counteracts the acidity generated by vacuolar (V)-ATPase, thereby limiting luminal acidification. Regulates organellar pH and consequently, endosome maturation and endocytic trafficking of plasma membrane receptors and neurotransporters. Promotes the recycling of transferrin receptors back to the cell surface to facilitate additional iron uptake in the brain. Regulates synaptic transmission by regulating the luminal pH of axonal endosomes. Regulates phagosome lumenal pH, thus affecting phagosome maturation, and consequently, microbicidal activity in macrophages. Can also be active at the cell surface of specialized cells, e.g., in the inner ear hair bundles uses the high K(+) of the endolymph to regulate intracelular pH. This is Sodium/hydrogen exchanger 9 (Slc9a9) from Rattus norvegicus (Rat).